A 405-amino-acid polypeptide reads, in one-letter code: L-rhamnonate dehydratase (405 aa).

Residues His33 and Arg59 each contribute to the substrate site. Mg(2+)-binding residues include Asp226, Glu252, and Glu280. His329 functions as the Proton acceptor in the catalytic mechanism. Glu349 contacts substrate.

This sequence belongs to the mandelate racemase/muconate lactonizing enzyme family. RhamD subfamily. In terms of assembly, homooctamer; tetramer of dimers. Mg(2+) is required as a cofactor.

The enzyme catalyses L-rhamnonate = 2-dehydro-3-deoxy-L-rhamnonate + H2O. Catalyzes the dehydration of L-rhamnonate to 2-keto-3-deoxy-L-rhamnonate (KDR). This chain is L-rhamnonate dehydratase, found in Escherichia coli O127:H6 (strain E2348/69 / EPEC).